The sequence spans 233 residues: Membrane steroid-binding protein 2 (233 aa).

Residues 23–43 (AFFTVLALAFAVYQVVSGFFV) traverse the membrane as a helical segment. The Cytochrome b5 heme-binding domain maps to 70 to 167 (EITEEELKLY…SKYVKVGTIQ (98 aa)). The interval 70–167 (EITEEELKLY…SKYVKVGTIQ (98 aa)) is steroid-binding. Composition is skewed to basic and acidic residues over residues 169–181 (KDGE…EPSE) and 202–224 (THDE…KDVA). The interval 169–233 (KDGEGKESSE…ATDDDDAAKE (65 aa)) is disordered. Threonine 225 carries the post-translational modification Phosphothreonine.

Belongs to the cytochrome b5 family. MAPR subfamily.

The protein resides in the cell membrane. This is Membrane steroid-binding protein 2 (MSBP2) from Arabidopsis thaliana (Mouse-ear cress).